A 277-amino-acid polypeptide reads, in one-letter code: Phosphatidylglycerol--prolipoprotein diacylglyceryl transferase (277 aa).

Transmembrane regions (helical) follow at residues 16–36, 58–78, 93–113, and 119–139; these read LGPI…LFGW, FLTW…VLFY, IWSG…AILL, and GFSP…GLFL. Residue R141 coordinates a 1,2-diacyl-sn-glycero-3-phospho-(1'-sn-glycerol). 3 helical membrane-spanning segments follow: residues 182 to 202, 207 to 227, and 239 to 259; these read AALE…KPAV, GTLS…GEVF, and FGVT…LWIL.

The protein belongs to the Lgt family.

The protein resides in the cell inner membrane. The enzyme catalyses L-cysteinyl-[prolipoprotein] + a 1,2-diacyl-sn-glycero-3-phospho-(1'-sn-glycerol) = an S-1,2-diacyl-sn-glyceryl-L-cysteinyl-[prolipoprotein] + sn-glycerol 1-phosphate + H(+). It functions in the pathway protein modification; lipoprotein biosynthesis (diacylglyceryl transfer). Its function is as follows. Catalyzes the transfer of the diacylglyceryl group from phosphatidylglycerol to the sulfhydryl group of the N-terminal cysteine of a prolipoprotein, the first step in the formation of mature lipoproteins. The protein is Phosphatidylglycerol--prolipoprotein diacylglyceryl transferase of Rhodospirillum centenum (strain ATCC 51521 / SW).